The primary structure comprises 76 residues: Sec-independent protein translocase protein TatA (76 aa).

Residues 1-21 form a helical membrane-spanning segment; that stretch reads MGSFSIWHWLIVLVIVMLVFG. Composition is skewed to basic and acidic residues over residues 41–50 and 57–76; these read DGMKDGEDKG and KELRDSTTIDVDAKEKSRQQ. Positions 41-76 are disordered; sequence DGMKDGEDKGAQPAASKELRDSTTIDVDAKEKSRQQ.

The protein belongs to the TatA/E family. In terms of assembly, the Tat system comprises two distinct complexes: a TatABC complex, containing multiple copies of TatA, TatB and TatC subunits, and a separate TatA complex, containing only TatA subunits. Substrates initially bind to the TatABC complex, which probably triggers association of the separate TatA complex to form the active translocon.

It is found in the cell inner membrane. In terms of biological role, part of the twin-arginine translocation (Tat) system that transports large folded proteins containing a characteristic twin-arginine motif in their signal peptide across membranes. TatA could form the protein-conducting channel of the Tat system. The polypeptide is Sec-independent protein translocase protein TatA (Cupriavidus taiwanensis (strain DSM 17343 / BCRC 17206 / CCUG 44338 / CIP 107171 / LMG 19424 / R1) (Ralstonia taiwanensis (strain LMG 19424))).